The primary structure comprises 473 residues: Siroheme synthase (473 aa).

Residues 1 to 203 (MQYLPIFTKL…GDTQAAEQQL (203 aa)) are precorrin-2 dehydrogenase /sirohydrochlorin ferrochelatase. Residues 22–23 (DV) and 43–44 (PK) contribute to the NAD(+) site. S128 carries the phosphoserine modification. The uroporphyrinogen-III C-methyltransferase stretch occupies residues 215–473 (GEVYVVGAGP…SFAQPLTDVA (259 aa)). P224 provides a ligand contact to S-adenosyl-L-methionine. D247 functions as the Proton acceptor in the catalytic mechanism. The active-site Proton donor is the K269. S-adenosyl-L-methionine contacts are provided by residues 300 to 302 (GGD), I305, 330 to 331 (TA), M382, and G411.

This sequence in the N-terminal section; belongs to the precorrin-2 dehydrogenase / sirohydrochlorin ferrochelatase family. In the C-terminal section; belongs to the precorrin methyltransferase family.

It catalyses the reaction uroporphyrinogen III + 2 S-adenosyl-L-methionine = precorrin-2 + 2 S-adenosyl-L-homocysteine + H(+). The enzyme catalyses precorrin-2 + NAD(+) = sirohydrochlorin + NADH + 2 H(+). It carries out the reaction siroheme + 2 H(+) = sirohydrochlorin + Fe(2+). Its pathway is cofactor biosynthesis; adenosylcobalamin biosynthesis; precorrin-2 from uroporphyrinogen III: step 1/1. It participates in cofactor biosynthesis; adenosylcobalamin biosynthesis; sirohydrochlorin from precorrin-2: step 1/1. It functions in the pathway porphyrin-containing compound metabolism; siroheme biosynthesis; precorrin-2 from uroporphyrinogen III: step 1/1. The protein operates within porphyrin-containing compound metabolism; siroheme biosynthesis; siroheme from sirohydrochlorin: step 1/1. Its pathway is porphyrin-containing compound metabolism; siroheme biosynthesis; sirohydrochlorin from precorrin-2: step 1/1. Its function is as follows. Multifunctional enzyme that catalyzes the SAM-dependent methylations of uroporphyrinogen III at position C-2 and C-7 to form precorrin-2 via precorrin-1. Then it catalyzes the NAD-dependent ring dehydrogenation of precorrin-2 to yield sirohydrochlorin. Finally, it catalyzes the ferrochelation of sirohydrochlorin to yield siroheme. The polypeptide is Siroheme synthase (Pseudoalteromonas translucida (strain TAC 125)).